The chain runs to 211 residues: uncharacterized protein (211 aa).

Transmembrane regions (helical) follow at residues 22-42 (FINFVRIAICIVMVWIGGLKV), 111-131 (IIGATIVTVGLLTLSGIWFPV), and 133-153 (GMAGGLLTFGMSIVTLSFMIT).

This sequence to E.coli YkgB. The protein to H.influenzae HI_0219.

Its subcellular location is the cell membrane. This is an uncharacterized protein from Mannheimia haemolytica (Pasteurella haemolytica).